We begin with the raw amino-acid sequence, 870 residues long: Leucine--tRNA ligase (870 aa).

The 'HIGH' region signature appears at 43–53; that stretch reads PYPSGRLHMGH. The 'KMSKS' region signature appears at 626–630; that stretch reads KMSKS. Residue lysine 629 coordinates ATP.

The protein belongs to the class-I aminoacyl-tRNA synthetase family.

It is found in the cytoplasm. It catalyses the reaction tRNA(Leu) + L-leucine + ATP = L-leucyl-tRNA(Leu) + AMP + diphosphate. This is Leucine--tRNA ligase from Pseudoalteromonas atlantica (strain T6c / ATCC BAA-1087).